The following is a 342-amino-acid chain: N-acetyl-gamma-glutamyl-phosphate reductase (342 aa).

Cys147 is a catalytic residue.

It belongs to the NAGSA dehydrogenase family. Type 1 subfamily.

Its subcellular location is the cytoplasm. It catalyses the reaction N-acetyl-L-glutamate 5-semialdehyde + phosphate + NADP(+) = N-acetyl-L-glutamyl 5-phosphate + NADPH + H(+). Its pathway is amino-acid biosynthesis; L-arginine biosynthesis; N(2)-acetyl-L-ornithine from L-glutamate: step 3/4. Catalyzes the NADPH-dependent reduction of N-acetyl-5-glutamyl phosphate to yield N-acetyl-L-glutamate 5-semialdehyde. The protein is N-acetyl-gamma-glutamyl-phosphate reductase of Campylobacter jejuni subsp. jejuni serotype O:23/36 (strain 81-176).